The following is a 431-amino-acid chain: TDP-daunosamine transferase DnrS (431 aa).

The signal sequence occupies residues 1 to 23; that stretch reads MKVLVTAFAMDAHFNGVVPLAWA.

It belongs to the glycosyltransferase 28 family.

The enzyme catalyses dTDP-beta-L-daunosamine + epsilon-rhodomycinone = rhodomycin D + dTDP + H(+). It functions in the pathway antibiotic biosynthesis; daunorubicin biosynthesis. The protein operates within antibiotic biosynthesis; carminomycin biosynthesis. Its function is as follows. Involved in the biosynthesis of the anthracyclines carminomycin and daunorubicin (daunomycin) which are aromatic polyketide antibiotics that exhibit high cytotoxicity and are widely applied in the chemotherapy of a variety of cancers. Catalyzes the addition of the TDP activated glycoside, L-daunosamine-TDP (2,3,6-trideoxy-3-aminohexose-TDP) at position C-7 of epsilon-rhodomycinone to yield rhodomycin D. Glycosylation is a prerequisite for biological activity of anthracyclines and requires DnrQ which seems to act as an activator. The polypeptide is TDP-daunosamine transferase DnrS (dnrS) (Streptomyces peucetius).